The primary structure comprises 428 residues: D-inositol 3-phosphate glycosyltransferase (428 aa).

His-5 contributes to the 1D-myo-inositol 3-phosphate binding site. Residues 11 to 12 (QP) and Gly-19 contribute to the UDP-N-acetyl-alpha-D-glucosamine site. Residues 16–21 (DAGGMN), Lys-74, Tyr-107, Thr-131, and Arg-151 contribute to the 1D-myo-inositol 3-phosphate site. Residues Arg-225, Lys-230, and Gln-283 each contribute to the UDP-N-acetyl-alpha-D-glucosamine site. Mg(2+) contacts are provided by Phe-292, Gln-293, and Ala-295. Residues Glu-305 and Glu-313 each coordinate UDP-N-acetyl-alpha-D-glucosamine. A Mg(2+)-binding site is contributed by Thr-319.

This sequence belongs to the glycosyltransferase group 1 family. MshA subfamily. As to quaternary structure, homodimer.

It catalyses the reaction 1D-myo-inositol 3-phosphate + UDP-N-acetyl-alpha-D-glucosamine = 1D-myo-inositol 2-acetamido-2-deoxy-alpha-D-glucopyranoside 3-phosphate + UDP + H(+). In terms of biological role, catalyzes the transfer of a N-acetyl-glucosamine moiety to 1D-myo-inositol 3-phosphate to produce 1D-myo-inositol 2-acetamido-2-deoxy-glucopyranoside 3-phosphate in the mycothiol biosynthesis pathway. This chain is D-inositol 3-phosphate glycosyltransferase, found in Mycobacterium leprae (strain Br4923).